A 739-amino-acid chain; its full sequence is Phosphoribosylformylglycinamidine synthase subunit PurL (739 aa).

Residue His-53 is part of the active site. ATP contacts are provided by Tyr-56 and Lys-95. Residue Glu-97 coordinates Mg(2+). Substrate-binding positions include 98-101 (SHNH) and Arg-120. The active-site Proton acceptor is His-99. Asp-121 is a binding site for Mg(2+). Gln-244 serves as a coordination point for substrate. Asp-274 contributes to the Mg(2+) binding site. 318–320 (ESQ) contacts substrate. Asp-501 and Gly-538 together coordinate ATP. Asn-539 contacts Mg(2+). Ser-541 lines the substrate pocket.

It belongs to the FGAMS family. As to quaternary structure, monomer. Part of the FGAM synthase complex composed of 1 PurL, 1 PurQ and 2 PurS subunits.

It is found in the cytoplasm. It carries out the reaction N(2)-formyl-N(1)-(5-phospho-beta-D-ribosyl)glycinamide + L-glutamine + ATP + H2O = 2-formamido-N(1)-(5-O-phospho-beta-D-ribosyl)acetamidine + L-glutamate + ADP + phosphate + H(+). The protein operates within purine metabolism; IMP biosynthesis via de novo pathway; 5-amino-1-(5-phospho-D-ribosyl)imidazole from N(2)-formyl-N(1)-(5-phospho-D-ribosyl)glycinamide: step 1/2. Part of the phosphoribosylformylglycinamidine synthase complex involved in the purines biosynthetic pathway. Catalyzes the ATP-dependent conversion of formylglycinamide ribonucleotide (FGAR) and glutamine to yield formylglycinamidine ribonucleotide (FGAM) and glutamate. The FGAM synthase complex is composed of three subunits. PurQ produces an ammonia molecule by converting glutamine to glutamate. PurL transfers the ammonia molecule to FGAR to form FGAM in an ATP-dependent manner. PurS interacts with PurQ and PurL and is thought to assist in the transfer of the ammonia molecule from PurQ to PurL. The polypeptide is Phosphoribosylformylglycinamidine synthase subunit PurL (Listeria innocua serovar 6a (strain ATCC BAA-680 / CLIP 11262)).